The following is a 181-amino-acid chain: ATP synthase subunit delta (181 aa).

This sequence belongs to the ATPase delta chain family. F-type ATPases have 2 components, F(1) - the catalytic core - and F(0) - the membrane proton channel. F(1) has five subunits: alpha(3), beta(3), gamma(1), delta(1), epsilon(1). F(0) has three main subunits: a(1), b(2) and c(10-14). The alpha and beta chains form an alternating ring which encloses part of the gamma chain. F(1) is attached to F(0) by a central stalk formed by the gamma and epsilon chains, while a peripheral stalk is formed by the delta and b chains. The F(1)F(0) complex interacts with SpoIIIJ and YqjG; YqgA is found in the same complex. Interacts with FloT.

The protein localises to the cell membrane. The protein resides in the membrane raft. Functionally, f(1)F(0) ATP synthase produces ATP from ADP in the presence of a proton or sodium gradient. F-type ATPases consist of two structural domains, F(1) containing the extramembraneous catalytic core and F(0) containing the membrane proton channel, linked together by a central stalk and a peripheral stalk. During catalysis, ATP synthesis in the catalytic domain of F(1) is coupled via a rotary mechanism of the central stalk subunits to proton translocation. This protein is part of the stalk that links CF(0) to CF(1). It either transmits conformational changes from CF(0) to CF(1) or is implicated in proton conduction. This is ATP synthase subunit delta from Bacillus subtilis (strain 168).